The sequence spans 604 residues: Protein TAX4 (604 aa).

5 disordered regions span residues 38-77 (HPNGNAGSAERPRHLKVESAPVVKSEPSLPRMRQPEPRSI), 133-249 (FSNR…RQQE), 267-300 (GTLPDLIPRSQRKTSKPRFKHKLLRSPEQQQENL), 338-380 (DETF…KGLK), and 394-428 (PFPHHHHHHHQLHNPNSHHLHTHHHTSSHKFNEDK). Polar residues predominate over residues 176–185 (YDNNVRSRSI). 2 stretches are compositionally biased toward low complexity: residues 186–203 (SPQVSYSTSLSSSCSISS) and 224–240 (SMSSYSLASKASAKASL). 3 stretches are compositionally biased toward basic residues: residues 276–290 (SQRKTSKPRFKHKLL), 366–379 (KKKKSRRSKIKKGL), and 396–421 (PHHHHHHHQLHNPNSHHLHTHHHTSS). One can recognise an EH domain in the interval 469-559 (ANEDDESHLQ…RVWNSVDGYV (91 aa)).

The protein belongs to the IRS4 family. In terms of assembly, interacts with INP51.

With IRS4, acts as a positive regulator of INP51 activity and phosphatidylinositol 4,5-bisphosphate turnover. Negatively regulates signaling through the cell integrity pathway, including the MAP kinase SLT2. This is Protein TAX4 (TAX4) from Saccharomyces cerevisiae (strain YJM789) (Baker's yeast).